Here is a 281-residue protein sequence, read N- to C-terminus: 2-dehydro-3-deoxyphosphooctonate aldolase (281 aa).

It belongs to the KdsA family.

It localises to the cytoplasm. The catalysed reaction is D-arabinose 5-phosphate + phosphoenolpyruvate + H2O = 3-deoxy-alpha-D-manno-2-octulosonate-8-phosphate + phosphate. It participates in carbohydrate biosynthesis; 3-deoxy-D-manno-octulosonate biosynthesis; 3-deoxy-D-manno-octulosonate from D-ribulose 5-phosphate: step 2/3. It functions in the pathway bacterial outer membrane biogenesis; lipopolysaccharide biosynthesis. This chain is 2-dehydro-3-deoxyphosphooctonate aldolase, found in Marinobacter nauticus (strain ATCC 700491 / DSM 11845 / VT8) (Marinobacter aquaeolei).